A 103-amino-acid polypeptide reads, in one-letter code: Acylphosphatase-2 (103 aa).

Position 2 is an N-acetylserine (Ser-2). The Acylphosphatase-like domain occupies 13-103 (SVDYEVFGRV…LDFSGFSTRY (91 aa)). S-glutathionyl cysteine; alternate is present on Cys-26. Residues Arg-28 and Asn-46 contribute to the active site.

Belongs to the acylphosphatase family. In terms of assembly, monomer (TU1) or homodimer (TU3) in absence of reducing factors; disulfide linked.

The catalysed reaction is an acyl phosphate + H2O = a carboxylate + phosphate + H(+). Its physiological role is not yet clear. The sequence is that of Acylphosphatase-2 (ACYP2) from Meleagris gallopavo (Wild turkey).